Reading from the N-terminus, the 117-residue chain is Toxin CSTX-8 (117 aa).

The first 20 residues, 1-20 (MKVLVICAVLFLAIFSNSSA), serve as a signal peptide directing secretion. Positions 21–47 (ETEDDFLEDESFQADDVIPFLASEQVR) are excised as a propeptide. 4 cysteine pairs are disulfide-bonded: cysteine 50–cysteine 65, cysteine 57–cysteine 74, cysteine 64–cysteine 95, and cysteine 76–cysteine 93. Positions 82-87 (RSETDR) are excised as a propeptide. A Threonine amide modification is found at threonine 116.

This sequence belongs to the neurotoxin 19 (CSTX) family. 12 subfamily. Heterodimer of A and B chains; disulfide-linked. Interacts with CSTX-1 (AC P81694), and with CSTX-9 (AC P58604). As to expression, expressed by the venom gland.

It localises to the secreted. Its subcellular location is the target cell membrane. Its function is as follows. Synergistic toxin that induces or increases a cytolytic effect when combined with CSTX-1 (AC P81694) or CSTX-9 (AC P58604). When alone, has a weak insecticidal activity, with an unknown molecular target. This is Toxin CSTX-8 from Cupiennius salei (American wandering spider).